We begin with the raw amino-acid sequence, 206 residues long: Large ribosomal subunit protein uL4 (206 aa).

Residues 63 to 93 (MYKQKGTGRARHHSARAPQFRGGGKAHGPVV) form a disordered region. The span at 64–77 (YKQKGTGRARHHSA) shows a compositional bias: basic residues.

It belongs to the universal ribosomal protein uL4 family. As to quaternary structure, part of the 50S ribosomal subunit.

In terms of biological role, one of the primary rRNA binding proteins, this protein initially binds near the 5'-end of the 23S rRNA. It is important during the early stages of 50S assembly. It makes multiple contacts with different domains of the 23S rRNA in the assembled 50S subunit and ribosome. Its function is as follows. Forms part of the polypeptide exit tunnel. This Sinorhizobium medicae (strain WSM419) (Ensifer medicae) protein is Large ribosomal subunit protein uL4.